Consider the following 190-residue polypeptide: Succinate dehydrogenase assembly factor 2, mitochondrial (190 aa).

It belongs to the SDHAF2 family. Interacts with the flavoprotein subunit within the SDH catalytic dimer.

The protein localises to the mitochondrion matrix. In terms of biological role, plays an essential role in the assembly of succinate dehydrogenase (SDH), an enzyme complex (also referred to as respiratory complex II) that is a component of both the tricarboxylic acid (TCA) cycle and the mitochondrial electron transport chain, and which couples the oxidation of succinate to fumarate with the reduction of ubiquinone (coenzyme Q) to ubiquinol. Required for flavinylation (covalent attachment of FAD) of the flavoprotein subunit of the SDH catalytic dimer. The polypeptide is Succinate dehydrogenase assembly factor 2, mitochondrial (Komagataella phaffii (strain GS115 / ATCC 20864) (Yeast)).